The following is a 549-amino-acid chain: Cation/acetate symporter ActP (549 aa).

13 helical membrane passes run 33-53 (WQAI…TYWA), 77-97 (LAIA…ALVF), 103-123 (GLIY…LIAE), 148-168 (ILSA…QMVG), 183-203 (IAVV…GMLA), 206-226 (WVQI…AFMV), 262-282 (ISAL…PHIL), 303-323 (GFMG…IMLV), 355-375 (LFLG…VAGL), 404-424 (VSKI…FLFE), 428-448 (IAFM…PIIL), 464-484 (GGWL…TIWV), and 493-513 (IFPY…GIWF).

The protein belongs to the sodium:solute symporter (SSF) (TC 2.A.21) family.

Its subcellular location is the cell inner membrane. Functionally, transports acetate. This Salmonella paratyphi C (strain RKS4594) protein is Cation/acetate symporter ActP.